A 956-amino-acid chain; its full sequence is Thrombospondin-3 (956 aa).

An N-terminal signal peptide occupies residues 1 to 22 (METQELRGALALLLLCFFTSAS). In terms of domain architecture, Laminin G-like spans 23–193 (QDLQVIDLLT…VESMKIILGG (171 aa)). Intrachain disulfides connect Cys278–Cys289, Cys283–Cys300, Cys303–Cys314, Cys320–Cys332, Cys326–Cys341, Cys344–Cys368, Cys374–Cys388, Cys382–Cys397, Cys400–Cys412, Cys418–Cys432, Cys426–Cys442, Cys444–Cys455, Cys471–Cys478, Cys483–Cys503, Cys519–Cys539, Cys542–Cys562, Cys578–Cys598, Cys601–Cys621, Cys639–Cys659, Cys679–Cys699, and Cys715–Cys936. Asn310 carries N-linked (GlcNAc...) asparagine glycosylation. The EGF-like 1; calcium-binding domain maps to 316–354 (DINECAHADPCFPGSSCINTMPGFHCEACPRGYKGTQVS). Positions 370–410 (DIDECNDGNNGGCDPNSICTNTVGSFKCGPCRLGFLGNQSQ) constitute an EGF-like 2; calcium-binding domain. An N-linked (GlcNAc...) asparagine glycan is attached at Asn407. One can recognise an EGF-like 3 domain in the interval 414-456 (PARTCHSPAHSPCHIHAHCLFERNGAVSCQCNVGWAGNGNVCG). TSP type-3 repeat units lie at residues 457 to 491 (TDTD…NSGQ), 492 to 527 (EDAD…NKDQ), 528 to 550 (QNSD…NNDQ), 551 to 586 (KDTD…NPLQ), 587 to 609 (TDRD…NPTQ), 610 to 647 (TDAD…NSSQ), 648 to 687 (LDSD…NPNQ), and 688 to 723 (KDSD…EVTL). Disordered regions lie at residues 518–537 (NCRL…SFGD) and 546–702 (PNND…CEDD). The segment covering 555-568 (GNGEGDACDNDVDG) has biased composition (acidic residues). Residues 612–628 (ADSDLVGDVCDTNEDSD) are compositionally biased toward acidic residues. N-linked (GlcNAc...) asparagine glycosylation is present at Asn644. A compositionally biased stretch (acidic residues) spans 650–667 (SDNDGLGDECDGDDDNDG). The region spanning 727 to 941 (RAYQTVVLDP…LQYRCNDTVP (215 aa)) is the TSP C-terminal domain. Asn937 is a glycosylation site (N-linked (GlcNAc...) asparagine).

The protein belongs to the thrombospondin family. As to quaternary structure, oligomer; disulfide-linked.

Functionally, adhesive glycoprotein that mediates cell-to-cell and cell-to-matrix interactions. Can bind to fibrinogen, fibronectin, laminin and type V collagen. The polypeptide is Thrombospondin-3 (THBS3) (Homo sapiens (Human)).